The sequence spans 372 residues: tRNA-specific 2-thiouridylase MnmA (372 aa).

ATP-binding positions include 16-23 (GMSGGVDS) and M42. The interaction with target base in tRNA stretch occupies residues 102–104 (NPD). The active-site Nucleophile is C107. The cysteines at positions 107 and 205 are disulfide-linked. Residue G132 participates in ATP binding. Residues 155-157 (KDQ) form an interaction with tRNA region. Catalysis depends on C205, which acts as the Cysteine persulfide intermediate. Positions 317-318 (RY) are interaction with tRNA.

The protein belongs to the MnmA/TRMU family.

It localises to the cytoplasm. The catalysed reaction is S-sulfanyl-L-cysteinyl-[protein] + uridine(34) in tRNA + AH2 + ATP = 2-thiouridine(34) in tRNA + L-cysteinyl-[protein] + A + AMP + diphosphate + H(+). Functionally, catalyzes the 2-thiolation of uridine at the wobble position (U34) of tRNA, leading to the formation of s(2)U34. The protein is tRNA-specific 2-thiouridylase MnmA of Shewanella sp. (strain MR-7).